A 282-amino-acid polypeptide reads, in one-letter code: NADPH-dependent 7-cyano-7-deazaguanine reductase (282 aa).

A substrate-binding site is contributed by 88 to 90 (IES). 90–91 (SK) is a binding site for NADPH. Residue C190 is the Thioimide intermediate of the active site. D197 serves as the catalytic Proton donor. Position 229–230 (229–230 (HE)) interacts with substrate. 258–259 (RG) provides a ligand contact to NADPH.

This sequence belongs to the GTP cyclohydrolase I family. QueF type 2 subfamily. In terms of assembly, homodimer.

It localises to the cytoplasm. The catalysed reaction is 7-aminomethyl-7-carbaguanine + 2 NADP(+) = 7-cyano-7-deazaguanine + 2 NADPH + 3 H(+). The protein operates within tRNA modification; tRNA-queuosine biosynthesis. In terms of biological role, catalyzes the NADPH-dependent reduction of 7-cyano-7-deazaguanine (preQ0) to 7-aminomethyl-7-deazaguanine (preQ1). This Citrobacter koseri (strain ATCC BAA-895 / CDC 4225-83 / SGSC4696) protein is NADPH-dependent 7-cyano-7-deazaguanine reductase.